Reading from the N-terminus, the 718-residue chain is Protein Hook homolog 1 (718 aa).

The Calponin-homology (CH) domain occupies 8–124 (PLLCDSLILW…RLMQLILGCA (117 aa)). Coiled-coil stretches lie at residues 164-428 (SASD…ELRY) and 473-652 (LLLQ…AKLR).

It belongs to the hook family. Interacts with microtubules.

The protein localises to the cytoplasm. It localises to the cytoskeleton. May function to promote vesicle trafficking and/or fusion. The protein is Protein Hook homolog 1 (HOOK1) of Gallus gallus (Chicken).